Consider the following 178-residue polypeptide: ATP-dependent protease subunit HslV (178 aa).

Residue threonine 7 is part of the active site. The Na(+) site is built by glycine 162, cysteine 165, and threonine 168.

It belongs to the peptidase T1B family. HslV subfamily. As to quaternary structure, a double ring-shaped homohexamer of HslV is capped on each side by a ring-shaped HslU homohexamer. The assembly of the HslU/HslV complex is dependent on binding of ATP.

It is found in the cytoplasm. It catalyses the reaction ATP-dependent cleavage of peptide bonds with broad specificity.. Allosterically activated by HslU binding. Protease subunit of a proteasome-like degradation complex believed to be a general protein degrading machinery. This is ATP-dependent protease subunit HslV from Burkholderia ambifaria (strain ATCC BAA-244 / DSM 16087 / CCUG 44356 / LMG 19182 / AMMD) (Burkholderia cepacia (strain AMMD)).